The chain runs to 191 residues: Large ribosomal subunit protein uL5 (191 aa).

This sequence belongs to the universal ribosomal protein uL5 family. Part of the 50S ribosomal subunit; part of the 5S rRNA/L5/L18/L25 subcomplex. Contacts the 5S rRNA and the P site tRNA. Forms a bridge to the 30S subunit in the 70S ribosome.

In terms of biological role, this is one of the proteins that bind and probably mediate the attachment of the 5S RNA into the large ribosomal subunit, where it forms part of the central protuberance. In the 70S ribosome it contacts protein S13 of the 30S subunit (bridge B1b), connecting the 2 subunits; this bridge is implicated in subunit movement. Contacts the P site tRNA; the 5S rRNA and some of its associated proteins might help stabilize positioning of ribosome-bound tRNAs. In Micrococcus luteus (strain ATCC 4698 / DSM 20030 / JCM 1464 / CCM 169 / CCUG 5858 / IAM 1056 / NBRC 3333 / NCIMB 9278 / NCTC 2665 / VKM Ac-2230) (Micrococcus lysodeikticus), this protein is Large ribosomal subunit protein uL5.